We begin with the raw amino-acid sequence, 263 residues long: 3-methyl-2-oxobutanoate hydroxymethyltransferase (263 aa).

Positions 43 and 82 each coordinate Mg(2+). 3-methyl-2-oxobutanoate contacts are provided by residues 43–44, Asp-82, and Lys-111; that span reads DS. Glu-113 provides a ligand contact to Mg(2+). The active-site Proton acceptor is the Glu-180.

This sequence belongs to the PanB family. In terms of assembly, homodecamer; pentamer of dimers. Requires Mg(2+) as cofactor.

Its subcellular location is the cytoplasm. The catalysed reaction is 3-methyl-2-oxobutanoate + (6R)-5,10-methylene-5,6,7,8-tetrahydrofolate + H2O = 2-dehydropantoate + (6S)-5,6,7,8-tetrahydrofolate. It participates in cofactor biosynthesis; (R)-pantothenate biosynthesis; (R)-pantoate from 3-methyl-2-oxobutanoate: step 1/2. In terms of biological role, catalyzes the reversible reaction in which hydroxymethyl group from 5,10-methylenetetrahydrofolate is transferred onto alpha-ketoisovalerate to form ketopantoate. This is 3-methyl-2-oxobutanoate hydroxymethyltransferase from Bdellovibrio bacteriovorus (strain ATCC 15356 / DSM 50701 / NCIMB 9529 / HD100).